The primary structure comprises 477 residues: Erythritol/L-threitol-binding protein (477 aa).

The tat-type signal signal peptide spans Met-1–Ala-38.

This sequence belongs to the bacterial solute-binding protein 1 family. Post-translationally, predicted to be exported by the Tat system. The position of the signal peptide cleavage has not been experimentally proven.

Part of an ABC transporter complex involved in erythritol/L-threitol import. Binds erythritol and L-threitol. Functions in the transport for the degradation pathways of erythritol and L-threitol, that allow M.smegmatis to grow on these compounds as the sole carbon source. The chain is Erythritol/L-threitol-binding protein from Mycolicibacterium smegmatis (strain ATCC 700084 / mc(2)155) (Mycobacterium smegmatis).